The primary structure comprises 473 residues: Vasculin (473 aa).

5 disordered regions span residues 1–26 (MAQH…SLNF), 44–163 (RRRH…EYPP), 196–240 (SQPV…SFPH), 258–286 (NFSP…QQPR), and 305–342 (LKRD…QERD). Residue serine 49 is modified to Phosphoserine. Residue arginine 87 is modified to Omega-N-methylarginine. Residues 93–107 (GSSRSRSSIFHSGKS) show a composition bias toward low complexity. A compositionally biased stretch (basic and acidic residues) spans 119 to 133 (ETGRKDDKRERKQFE). A phosphoserine mark is found at serine 274, serine 276, serine 322, and serine 381. A compositionally biased stretch (basic and acidic residues) spans 305–329 (LKRDRVEEEHEDESHVGSEKDDDSF). The tract at residues 444–473 (GPWKNSTFKPTIENDDTETSSSDTSDDDDV) is disordered. Residues 456–473 (ENDDTETSSSDTSDDDDV) show a composition bias toward acidic residues.

It belongs to the vasculin family. Interacts with GTF2B, GTF2F2, RNA polymerase II and TBP.

It localises to the nucleus. In terms of biological role, functions as a GC-rich promoter-specific transactivating transcription factor. The sequence is that of Vasculin (GPBP1) from Bos taurus (Bovine).